The following is a 541-amino-acid chain: Membrane protein insertase YidC (541 aa).

6 helical membrane passes run 7–27 (FLIV…GVTH), 289–309 (YLLT…VTLP), 356–376 (IIHS…LAFY), 430–450 (LPIL…LEMV), 463–483 (LSAQ…MFAQ), and 498–518 (IMMA…SGLV).

This sequence belongs to the OXA1/ALB3/YidC family. Type 1 subfamily. As to quaternary structure, interacts with the Sec translocase complex via SecD. Specifically interacts with transmembrane segments of nascent integral membrane proteins during membrane integration.

The protein localises to the cell inner membrane. In terms of biological role, required for the insertion and/or proper folding and/or complex formation of integral membrane proteins into the membrane. Involved in integration of membrane proteins that insert both dependently and independently of the Sec translocase complex, as well as at least some lipoproteins. Aids folding of multispanning membrane proteins. In Ruthia magnifica subsp. Calyptogena magnifica, this protein is Membrane protein insertase YidC.